Here is a 482-residue protein sequence, read N- to C-terminus: Proline--tRNA ligase (482 aa).

The protein belongs to the class-II aminoacyl-tRNA synthetase family. ProS type 3 subfamily. Homodimer.

The protein localises to the cytoplasm. The catalysed reaction is tRNA(Pro) + L-proline + ATP = L-prolyl-tRNA(Pro) + AMP + diphosphate. Its function is as follows. Catalyzes the attachment of proline to tRNA(Pro) in a two-step reaction: proline is first activated by ATP to form Pro-AMP and then transferred to the acceptor end of tRNA(Pro). This is Proline--tRNA ligase from Thermofilum pendens (strain DSM 2475 / Hrk 5).